Consider the following 900-residue polypeptide: 3'-5' exonuclease DinG (900 aa).

The 154-residue stretch at 8-161 folds into the Exonuclease domain; it reads VVDLETTGNQ…DEDAATTAQL (154 aa). One can recognise a Helicase ATP-binding domain in the interval 241 to 496; sequence TLVTKELGLT…KSIDLLEQQR (256 aa). Residue 276–283 participates in ATP binding; it reads APLGSGKS. The short motif at 448–451 is the DEAH box element; that stretch reads DEAH. One can recognise a Helicase C-terminal domain in the interval 714 to 883; it reads YVIEYVSVVE…RYRQKKGDIK (170 aa).

This sequence belongs to the helicase family. DinG subfamily. Type 2 sub-subfamily.

Its function is as follows. 3'-5' exonuclease. This is 3'-5' exonuclease DinG from Staphylococcus saprophyticus subsp. saprophyticus (strain ATCC 15305 / DSM 20229 / NCIMB 8711 / NCTC 7292 / S-41).